We begin with the raw amino-acid sequence, 860 residues long: Receptor-like protein 31 (860 aa).

Positions 1–23 are cleaved as a signal peptide; that stretch reads MMIPSQSCFCFFFMVSFFLHTLA. Topologically, residues 24–809 are extracellular; that stretch reads SPTLRHCRHD…SEPEEHVINW (786 aa). N-linked (GlcNAc...) asparagine glycosylation is found at N49, N64, N88, N95, N112, N117, N154, N178, N202, and N213. 6 LRR repeats span residues 108 to 131, 132 to 155, 156 to 179, 181 to 202, 203 to 226, and 227 to 251; these read QHLH…LGNL, FRLT…IGNL, SRLT…IGNL, QLEY…TFSN, LTKL…DMSG, and FQNL…LFTI. The LRR 7; degenerate repeat unit spans residues 252–276; the sequence is PSLRWANLEGNMFKGPIEFRNMYSP. 14 LRR repeats span residues 277 to 301, 302 to 325, 326 to 349, 350 to 374, 376 to 398, 400 to 419, 420 to 444, 446 to 468, 469 to 494, 496 to 517, 518 to 541, 543 to 564, 565 to 591, and 592 to 615; these read STRL…LSQY, LNLI…LFTI, PTLE…NMSS, SSSL…VSQY, NLEE…ISKL, KLEY…PSWL, WRLT…GLDE, QVQW…ICKL, RSLE…SFMV, LTDL…FVNA, TKLL…LIHC, AMQL…WLGS, LPSL…SIGF, and QSLR…YFSS. N-linked (GlcNAc...) asparagine glycosylation is found at N313, N346, and N364. N429 carries an N-linked (GlcNAc...) asparagine glycan. N482, N503, and N516 each carry an N-linked (GlcNAc...) asparagine glycan. N642, N673, and N697 each carry an N-linked (GlcNAc...) asparagine glycan. LRR repeat units follow at residues 665-690, 691-714, 716-738, and 740-763; these read INEE…IGLL, KELR…LANL, KLEA…LGSL, and FMST…QFQG. N-linked (GlcNAc...) asparagine glycosylation is found at N745 and N765. Residues 810–830 form a helical membrane-spanning segment; it reads IAAGIAYGPGVVCGLVIGHIF. Topologically, residues 831 to 860 are cytoplasmic; the sequence is LSHKHECWFMEKFRRKKPKVVTRIARPSKH.

It belongs to the RLP family.

The protein resides in the cell membrane. The protein is Receptor-like protein 31 of Arabidopsis thaliana (Mouse-ear cress).